A 92-amino-acid polypeptide reads, in one-letter code: MASQQEKKELDARARQGETVVPGGTGGKSLEAQQHLAEGRSKGGQTRKEQLGGEGYHEMGRKGGLSNNDMSGGERAEQEGIDIDESKFRTKK.

3 stretches are compositionally biased toward basic and acidic residues: residues 1–16 (MASQ…RARQ), 37–61 (AEGR…EMGR), and 72–92 (GGER…RTKK). Positions 1–92 (MASQQEKKEL…IDESKFRTKK (92 aa)) are disordered.

The protein belongs to the small hydrophilic plant seed protein family. Expressed in embryogenic cells, somatic embryos and seeds at the later stages of development. In the embryos, expressed in the procambium, the root and shoot meristem and the protoderm of the cotyledons. Not detected in the endosperm or the aleurone layer, in young leaves or roots.

The protein localises to the nucleus. This Daucus carota (Wild carrot) protein is Protein EMB-1.